The sequence spans 1706 residues: Probable ATP-dependent RNA helicase DDX60-like (1706 aa).

A disordered region spans residues arginine 545–glutamine 580. Over residues serine 551–histidine 564 the composition is skewed to polar residues. Basic residues predominate over residues glutamine 565–serine 574. The region spanning leucine 752–lysine 919 is the Helicase ATP-binding domain. Alanine 765–threonine 772 serves as a coordination point for ATP. Positions aspartate 869–histidine 872 match the DEAH box motif. Residues aspartate 1205–leucine 1354 enclose the Helicase C-terminal domain.

Belongs to the helicase family.

It carries out the reaction ATP + H2O = ADP + phosphate + H(+). This is Probable ATP-dependent RNA helicase DDX60-like from Homo sapiens (Human).